Reading from the N-terminus, the 508-residue chain is NADH-quinone oxidoreductase subunit N 1 (508 aa).

A run of 13 helical transmembrane segments spans residues 2 to 22 (ILGP…GALL), 47 to 67 (ALGT…VGFV), 87 to 107 (FTLF…LLAG), 126 to 146 (FSTV…LFLG), 175 to 195 (FLLG…IYGA), 220 to 240 (ALLL…VSAV), 260 to 280 (FMAV…LLGA), 291 to 311 (AGWP…ANLI), 321 to 341 (MLAY…AATV), 351 to 371 (VMFY…TLIL), 396 to 416 (ALAF…AGFF), 431 to 453 (YTLS…RVLV), and 479 to 499 (LVVS…SLGI).

This sequence belongs to the complex I subunit 2 family. NDH-1 is composed of 14 different subunits. Subunits NuoA, H, J, K, L, M, N constitute the membrane sector of the complex.

It localises to the cell inner membrane. The catalysed reaction is a quinone + NADH + 5 H(+)(in) = a quinol + NAD(+) + 4 H(+)(out). NDH-1 shuttles electrons from NADH, via FMN and iron-sulfur (Fe-S) centers, to quinones in the respiratory chain. The immediate electron acceptor for the enzyme in this species is believed to be ubiquinone. Couples the redox reaction to proton translocation (for every two electrons transferred, four hydrogen ions are translocated across the cytoplasmic membrane), and thus conserves the redox energy in a proton gradient. The protein is NADH-quinone oxidoreductase subunit N 1 of Sorangium cellulosum (strain So ce56) (Polyangium cellulosum (strain So ce56)).